Here is a 543-residue protein sequence, read N- to C-terminus: Cytochrome P450 monooxygenase sphH (543 aa).

The next 2 helical transmembrane spans lie at 1 to 21 (MGPIHNYFGVVCLGIAASVYF) and 32 to 52 (IATFAVLLTGIAISKLLYQLF). Heme is bound at residue Cys487.

Belongs to the cytochrome P450 family. It depends on heme as a cofactor.

The protein resides in the membrane. The enzyme catalyses presphingofungin + 2 reduced [NADPH--hemoprotein reductase] + O2 = sphingofungin B1 + 2 oxidized [NADPH--hemoprotein reductase] + H2O + 2 H(+). The protein operates within secondary metabolite biosynthesis. Functionally, cytochrome P450 monooxygenase; part of the gene cluster that mediates the biosynthesis of sphingofungins, bioactive molecules acting as sphingolipid inhibitors via inhibiting serine palmitoyl transferase (SPT). Within the pathway, sphH catalyzes the conversion of presphingofungin into sphingofungin B1 via hydroxylagtion at position C-14. Sphingofungin biosynthesis starts with the PKS sphB that produces an C18 polyketide precursor 3-hydroxyoctadeca-4,10-dienoyl-ACP containing one delta-6 desaturation and one delta-12 desaturation. The aminoacyl transferase sphA uses the sphB product to produce 3-keto-presphingofungin by adding an aminomalonate molecule. SphF then reduces the C-3 ketone of 3-keto-presphingofungin which leads to presphingofungin. The cytochrome P450 monooxygenase sphH converts presphingofungin into sphingofungin B1 which is further converted to sphingofungin B by the dioxygenase sphC. SphC is also able to convert presphingofungin into sphingofungin B2. The acetyltransferase sphE acetylates sphingofungin B to produce sphingofungin C, but can also convert sphingofungin B1 into sphingofungin C1 and sphingofungin B2 into sphingofungin C2. Finally, sphingofungin C can be spontaneously converted into sphingofungin D. This Aspergillus fumigatus (strain CBS 144.89 / FGSC A1163 / CEA10) (Neosartorya fumigata) protein is Cytochrome P450 monooxygenase sphH.